The sequence spans 140 residues: Nucleoside diphosphate kinase (140 aa).

ATP contacts are provided by Lys11, Phe59, Arg87, Thr93, Arg104, and Asn114. His117 serves as the catalytic Pros-phosphohistidine intermediate.

The protein belongs to the NDK family. As to quaternary structure, homotetramer. Requires Mg(2+) as cofactor.

The protein localises to the cytoplasm. The enzyme catalyses a 2'-deoxyribonucleoside 5'-diphosphate + ATP = a 2'-deoxyribonucleoside 5'-triphosphate + ADP. It carries out the reaction a ribonucleoside 5'-diphosphate + ATP = a ribonucleoside 5'-triphosphate + ADP. Functionally, major role in the synthesis of nucleoside triphosphates other than ATP. The ATP gamma phosphate is transferred to the NDP beta phosphate via a ping-pong mechanism, using a phosphorylated active-site intermediate. The chain is Nucleoside diphosphate kinase from Granulibacter bethesdensis (strain ATCC BAA-1260 / CGDNIH1).